Here is a 128-residue protein sequence, read N- to C-terminus: uncharacterized protein (128 aa).

The N-terminal stretch at 1 to 24 is a signal peptide; sequence MKMTKLTTLLLTATLGLASGAALA. Low complexity-rich tracts occupy residues 24-44 and 52-70; these read AAES…NAGQ and NVAP…GNTN. The disordered stretch occupies residues 24–128; it reads AAESNAQSSN…VNTKTDGTTQ (105 aa). Over residues 71–82 the composition is skewed to polar residues; it reads STMQHPDGSTMN. Basic and acidic residues predominate over residues 85–110; sequence GMTKDEEHKNTMCKDGRCPDINKKVE. Over residues 113-128 the composition is skewed to polar residues; the sequence is NGVNNDVNTKTDGTTQ.

This is an uncharacterized protein from Salmonella typhi.